A 184-amino-acid polypeptide reads, in one-letter code: MREYKLVVLGSGGVGKSALTVQFVQGIFVEKYDPTIEDSYRKQVEVDCQQCMLEILDTAGTEQFTAMRDLYMKNGQGFALVYSITAQSTFNDLQDLREQILRVKDTEDVPMILVGNKCDLEDERVVGKEQGQNLARQWCNCAFLESSAKSKINVNEIFYDLVRQINRKTPVEKKKPKKKSCLLL.

Residues 10 to 18, 29 to 35, glycine 60, and 116 to 119 contribute to the GTP site; these read GSGGVGKSA, VEKYDPT, and NKCD. Positions 32-40 match the Effector region motif; the sequence is YDPTIEDSY. Cysteine 181 is subject to Cysteine methyl ester. Residue cysteine 181 is the site of S-geranylgeranyl cysteine attachment. Residues 182-184 constitute a propeptide, removed in mature form; it reads LLL.

This sequence belongs to the small GTPase superfamily. Ras family. In terms of assembly, found in a complex, at least composed of ITGB1BP1, KRIT1 and RAP1A. Interacts (active GTP-bound form preferentially) with KRIT1 (via C-terminus FERM domain); the interaction does not induce the opening conformation of KRIT1. Found in a complex composed of CDH1, RAP1A and PKP3; PKP3 acts as a scaffold protein within the complex, the complex is required for CDH1 localization to mature desmosome cell junctions. In its GTP-bound form interacts with PLCE1 and RADIL. Interacts with SGSM1, SGSM2 and SGSM3. Interacts (via GTP-bound active form) with RAPGEF2 (via Ras-associating domain). Interacts with TBC1D21. Interacts with RAP1GDS1.

The protein localises to the cell membrane. Its subcellular location is the cytoplasm. It localises to the perinuclear region. The protein resides in the cell junction. It is found in the early endosome. The catalysed reaction is GTP + H2O = GDP + phosphate + H(+). Its activity is regulated as follows. Activated by guanine nucleotide-exchange factors (GEF) EPAC and EPAC2 in a cAMP-dependent manner, and GFR. Functionally, counteracts the mitogenic function of Ras, at least partly because it can interact with Ras GAPs and RAF in a competitive manner. Together with ITGB1BP1, regulates KRIT1 localization to microtubules and membranes. Plays a role in nerve growth factor (NGF)-induced neurite outgrowth. Plays a role in the regulation of embryonic blood vessel formation. Involved in the establishment of basal endothelial barrier function. Facilitates the progressive accumulation of CDH1 at mature desmosome junctions via cAMP-dependent signaling and its interaction with PKP3. May be involved in the regulation of the vascular endothelial growth factor receptor KDR expression at endothelial cell-cell junctions. In Bos taurus (Bovine), this protein is Ras-related protein Rap-1A (RAP1A).